The following is a 238-amino-acid chain: Histidine/lysine/arginine/ornithine transport system permease protein HisM (238 aa).

Topologically, residues 1 to 26 (MIEILHEYWKPLLWTDGYRFTGVAIT) are periplasmic. The region spanning 23 to 221 (VAITLWLLIL…IISYVLISLF (199 aa)) is the ABC transmembrane type-1 domain. Residues 27-47 (LWLLILSVVIGGVLALFLAIG) traverse the membrane as a helical segment. At 48–58 (RVSSNKYIQFP) the chain is on the cytoplasmic side. Residues 59-79 (IWLFTYIFRGTPLYVQLLVFY) form a helical membrane-spanning segment. Topologically, residues 80-104 (SGMYTLEIVKGTEFLNAFFRSGLNC) are periplasmic. Residues 105–125 (TVLALTLNTCAYTTEIFAGAI) form a helical membrane-spanning segment. The Cytoplasmic portion of the chain corresponds to 126–157 (RSVPHGEIEAARAYGFSTFKMYRCIILPSALR). The chain crosses the membrane as a helical span at residues 158–178 (IALPAYSNEVILMLHSTALAF). Over 179-199 (TATVPDLLKIARDINAATYQP) the chain is Periplasmic. The chain crosses the membrane as a helical span at residues 200 to 220 (FTAFGIAAVLYLIISYVLISL). Residues 221–238 (FRRAEKRWLQHVKPSSTH) are Cytoplasmic-facing.

It belongs to the binding-protein-dependent transport system permease family. HisMQ subfamily. As to quaternary structure, the HisPMQJ complex is composed of two ATP-binding proteins (HisP), two transmembrane proteins (HisM and HisQ) and a solute-binding protein (HisJ). The HisPMQ-ArgT complex is composed of two ATP-binding proteins (HisP), two transmembrane proteins (HisM and HisQ) and a solute-binding protein (ArgT).

The protein localises to the cell inner membrane. In terms of biological role, part of the ABC transporter complex HisPMQJ involved in histidine transport. Is also part of the ABC transporter complex HisPMQ-ArgT involved in lysine/arginine/ornithine transport. Probably responsible for the translocation of the substrate across the membrane. In Escherichia coli O157:H7, this protein is Histidine/lysine/arginine/ornithine transport system permease protein HisM (hisM).